A 122-amino-acid chain; its full sequence is Small ribosomal subunit protein uS13 (122 aa).

The tract at residues 99-122 (RGQRTHTNARTRKGPAKAIAGKKK) is disordered.

This sequence belongs to the universal ribosomal protein uS13 family. Part of the 30S ribosomal subunit. Forms a loose heterodimer with protein S19. Forms two bridges to the 50S subunit in the 70S ribosome.

Located at the top of the head of the 30S subunit, it contacts several helices of the 16S rRNA. In the 70S ribosome it contacts the 23S rRNA (bridge B1a) and protein L5 of the 50S subunit (bridge B1b), connecting the 2 subunits; these bridges are implicated in subunit movement. Contacts the tRNAs in the A and P-sites. This Rhodopseudomonas palustris (strain BisB5) protein is Small ribosomal subunit protein uS13.